A 200-amino-acid polypeptide reads, in one-letter code: Imidazoleglycerol-phosphate dehydratase (200 aa).

This sequence belongs to the imidazoleglycerol-phosphate dehydratase family.

The protein resides in the cytoplasm. It catalyses the reaction D-erythro-1-(imidazol-4-yl)glycerol 3-phosphate = 3-(imidazol-4-yl)-2-oxopropyl phosphate + H2O. The protein operates within amino-acid biosynthesis; L-histidine biosynthesis; L-histidine from 5-phospho-alpha-D-ribose 1-diphosphate: step 6/9. This chain is Imidazoleglycerol-phosphate dehydratase, found in Leifsonia xyli subsp. xyli (strain CTCB07).